Reading from the N-terminus, the 136-residue chain is Nucleoside diphosphate kinase (136 aa).

K10, F58, R86, T92, R104, and N114 together coordinate ATP. The Pros-phosphohistidine intermediate role is filled by H117.

This sequence belongs to the NDK family. Homotetramer. It depends on Mg(2+) as a cofactor.

It is found in the cytoplasm. The enzyme catalyses a 2'-deoxyribonucleoside 5'-diphosphate + ATP = a 2'-deoxyribonucleoside 5'-triphosphate + ADP. It carries out the reaction a ribonucleoside 5'-diphosphate + ATP = a ribonucleoside 5'-triphosphate + ADP. Functionally, major role in the synthesis of nucleoside triphosphates other than ATP. The ATP gamma phosphate is transferred to the NDP beta phosphate via a ping-pong mechanism, using a phosphorylated active-site intermediate. In Mycobacterium ulcerans (strain Agy99), this protein is Nucleoside diphosphate kinase.